A 411-amino-acid chain; its full sequence is Na(+)/H(+) antiporter NhaA 2 (411 aa).

10 consecutive transmembrane segments (helical) span residues 18 to 38 (VGGS…NSPV), 59 to 79 (LTVG…VAGL), 97 to 117 (LLPI…AATI), 127 to 147 (GWAI…ALTG), 167 to 187 (LLAI…LWLL), 218 to 238 (WYCM…LGLL), 261 to 281 (PLSA…VALS), 297 to 317 (VIAG…WLAI), 338 to 358 (VLGA…LAGI), and 366 to 386 (IAKV…SALL).

Belongs to the NhaA Na(+)/H(+) (TC 2.A.33) antiporter family.

It localises to the cell membrane. The enzyme catalyses Na(+)(in) + 2 H(+)(out) = Na(+)(out) + 2 H(+)(in). Na(+)/H(+) antiporter that extrudes sodium in exchange for external protons. The sequence is that of Na(+)/H(+) antiporter NhaA 2 from Rhodococcus jostii (strain RHA1).